A 63-amino-acid chain; its full sequence is Prokaryotic ubiquitin-like protein Pup 1 (63 aa).

2 stretches are compositionally biased toward basic and acidic residues: residues 1-12 and 24-33; these read MSQEKVQRHGGG and GQERREKLGE. The segment at 1–35 is disordered; sequence MSQEKVQRHGGGDGEEESGPEAAGQERREKLGEDV. Residues 20 to 57 form an ARC ATPase binding region; it reads PEAAGQERREKLGEDVDAILDEIDDVLEENAEDFVRAY. Positions 25-51 form a coiled coil; the sequence is QERREKLGEDVDAILDEIDDVLEENAE. The residue at position 63 (Q63) is a Deamidated glutamine. An Isoglutamyl lysine isopeptide (Gln-Lys) (interchain with K-? in acceptor proteins) cross-link involves residue Q63.

It belongs to the prokaryotic ubiquitin-like protein family. Strongly interacts with the proteasome-associated ATPase ARC through a hydrophobic interface; the interacting region of Pup lies in its C-terminal half. There is one Pup binding site per ARC hexamer ring. Is modified by deamidation of its C-terminal glutamine to glutamate by the deamidase Dop, a prerequisite to the subsequent pupylation process.

The protein operates within protein degradation; proteasomal Pup-dependent pathway. Protein modifier that is covalently attached to lysine residues of substrate proteins, thereby targeting them for proteasomal degradation. The tagging system is termed pupylation. This is Prokaryotic ubiquitin-like protein Pup 1 from Saccharopolyspora erythraea (strain ATCC 11635 / DSM 40517 / JCM 4748 / NBRC 13426 / NCIMB 8594 / NRRL 2338).